Consider the following 64-residue polypeptide: OPG024 protein (64 aa).

Residues 1-64 (MSSKGGSSGG…GGVKSGTGKI (64 aa)) are disordered. Low complexity predominate over residues 23-34 (NKGSKTYTSSGS). Positions 49 to 64 (VNGGVNGGVKSGTGKI) are enriched in gly residues.

This sequence belongs to the orthopoxvirus OPG024 family.

This Cynomys gunnisoni (Gunnison's prairie dog) protein is OPG024 protein (OPG023).